The sequence spans 301 residues: tRNA U34 carboxymethyltransferase (301 aa).

Residues Lys-70, Trp-84, Lys-89, Gly-108, Asp-130–Ser-132, Val-157–Glu-158, Tyr-177, and Arg-292 each bind carboxy-S-adenosyl-L-methionine.

This sequence belongs to the class I-like SAM-binding methyltransferase superfamily. CmoB family. As to quaternary structure, homotetramer.

The catalysed reaction is carboxy-S-adenosyl-L-methionine + 5-hydroxyuridine(34) in tRNA = 5-carboxymethoxyuridine(34) in tRNA + S-adenosyl-L-homocysteine + H(+). Catalyzes carboxymethyl transfer from carboxy-S-adenosyl-L-methionine (Cx-SAM) to 5-hydroxyuridine (ho5U) to form 5-carboxymethoxyuridine (cmo5U) at position 34 in tRNAs. The polypeptide is tRNA U34 carboxymethyltransferase (Sulfurovum sp. (strain NBC37-1)).